Consider the following 615-residue polypeptide: Elongation factor 4 (615 aa).

Residues 17-198 (ASIRNFCIIA…RVSRTIPAPV (182 aa)) form the tr-type G domain. Residues 29–34 (DHGKST) and 145–148 (NKID) each bind GTP.

The protein belongs to the TRAFAC class translation factor GTPase superfamily. Classic translation factor GTPase family. LepA subfamily.

It localises to the cell membrane. It catalyses the reaction GTP + H2O = GDP + phosphate + H(+). Required for accurate and efficient protein synthesis under certain stress conditions. May act as a fidelity factor of the translation reaction, by catalyzing a one-codon backward translocation of tRNAs on improperly translocated ribosomes. Back-translocation proceeds from a post-translocation (POST) complex to a pre-translocation (PRE) complex, thus giving elongation factor G a second chance to translocate the tRNAs correctly. Binds to ribosomes in a GTP-dependent manner. The sequence is that of Elongation factor 4 from Clavibacter michiganensis subsp. michiganensis (strain NCPPB 382).